We begin with the raw amino-acid sequence, 524 residues long: Alkaline phosphatase, tissue-nonspecific isozyme (524 aa).

The first 17 residues, 1–17 (MISPFLVLAIGTCLTNS), serve as a signal peptide directing secretion. Residue Asp-60 coordinates Mg(2+). Residues Asp-60 and Ser-110 each contribute to the Zn(2+) site. The active-site Phosphoserine intermediate is the Ser-110. Ser-110 is modified (phosphoserine). A disulfide bridge links Cys-139 with Cys-201. N-linked (GlcNAc...) asparagine glycosylation is present at Asn-140. Position 173 (Thr-173) interacts with Mg(2+). N-linked (GlcNAc...) asparagine glycosylation occurs at Asn-230. Residue Glu-235 coordinates Ca(2+). N-linked (GlcNAc...) asparagine glycosylation occurs at Asn-271. Residues Phe-290 and Glu-291 each contribute to the Ca(2+) site. Asn-303 carries an N-linked (GlcNAc...) asparagine glycan. Asp-306 lines the Ca(2+) pocket. Residue Glu-332 participates in Mg(2+) binding. Zn(2+) is bound by residues Asp-337, His-341, Asp-378, and His-379. The N-linked (GlcNAc...) asparagine glycan is linked to Asn-430. His-454 contacts Zn(2+). Cys-489 and Cys-497 are oxidised to a cystine. Residue Gly-501 is the site of GPI-anchor amidated glycine attachment. Positions 502–524 (SGSAPSPGALLLPLAVLSLRTLF) are cleaved as a propeptide — removed in mature form.

This sequence belongs to the alkaline phosphatase family. Homodimer. Mg(2+) is required as a cofactor. Requires Zn(2+) as cofactor. The cofactor is Ca(2+). N-glycosylated. In terms of tissue distribution, widely expressed. Expressed in DRG neurons and spinal cord neurons.

It is found in the cell membrane. The protein resides in the extracellular vesicle membrane. It localises to the mitochondrion membrane. Its subcellular location is the mitochondrion intermembrane space. It carries out the reaction a phosphate monoester + H2O = an alcohol + phosphate. The enzyme catalyses diphosphate + H2O = 2 phosphate + H(+). The catalysed reaction is pyridoxal 5'-phosphate + H2O = pyridoxal + phosphate. It catalyses the reaction phosphoethanolamine + H2O = ethanolamine + phosphate. It carries out the reaction N-phosphocreatine + H2O = creatine + phosphate. The enzyme catalyses ATP + H2O = ADP + phosphate + H(+). The catalysed reaction is ADP + H2O = AMP + phosphate + H(+). It catalyses the reaction AMP + H2O = adenosine + phosphate. Phosphatase activity is specifically inhibited by 5-((5-chloro-2-methoxyphenyl)sulfonamido)nicotinamide (SBI-425). Alkaline phosphatase that metabolizes various phosphate compounds and plays a key role in skeletal mineralization and adaptive thermogenesis. Has broad substrate specificity and can hydrolyze a considerable variety of compounds: however, only a few substrates, such as diphosphate (inorganic pyrophosphate; PPi), pyridoxal 5'-phosphate (PLP) and N-phosphocreatine are natural substrates. Plays an essential role in skeletal and dental mineralization via its ability to hydrolyze extracellular diphosphate, a potent mineralization inhibitor, to phosphate: it thereby promotes hydroxyapatite crystal formation and increases inorganic phosphate concentration. Acts in a non-redundant manner with PHOSPHO1 in skeletal mineralization: while PHOSPHO1 mediates the initiation of hydroxyapatite crystallization in the matrix vesicles (MVs), ALPL/TNAP catalyzes the spread of hydroxyapatite crystallization in the extracellular matrix. Also promotes dephosphorylation of osteopontin (SSP1), an inhibitor of hydroxyapatite crystallization in its phosphorylated state; it is however unclear whether ALPL/TNAP mediates SSP1 dephosphorylation via a direct or indirect manner. Catalyzes dephosphorylation of PLP to pyridoxal (PL), the transportable form of vitamin B6, in order to provide a sufficient amount of PLP in the brain, an essential cofactor for enzymes catalyzing the synthesis of diverse neurotransmitters. Additionally, also able to mediate ATP degradation in a stepwise manner to adenosine, thereby regulating the availability of ligands for purinergic receptors. Also capable of dephosphorylating microbial products, such as lipopolysaccharides (LPS) as well as other phosphorylated small-molecules, such as poly-inosine:cytosine (poly I:C). Acts as a key regulator of adaptive thermogenesis as part of the futile creatine cycle: localizes to the mitochondria of thermogenic fat cells and acts by mediating hydrolysis of N-phosphocreatine to initiate a futile cycle of creatine dephosphorylation and phosphorylation. During the futile creatine cycle, creatine and N-phosphocreatine are in a futile cycle, which dissipates the high energy charge of N-phosphocreatine as heat without performing any mechanical or chemical work. This Mus musculus (Mouse) protein is Alkaline phosphatase, tissue-nonspecific isozyme.